We begin with the raw amino-acid sequence, 305 residues long: tRNA uridine(34) hydroxylase (305 aa).

One can recognise a Rhodanese domain in the interval 124 to 219 (QDEETLVVDT…YLETIPKEES (96 aa)). Residue Cys179 is the Cysteine persulfide intermediate of the active site.

The protein belongs to the TrhO family.

The enzyme catalyses uridine(34) in tRNA + AH2 + O2 = 5-hydroxyuridine(34) in tRNA + A + H2O. Functionally, catalyzes oxygen-dependent 5-hydroxyuridine (ho5U) modification at position 34 in tRNAs. The chain is tRNA uridine(34) hydroxylase from Bartonella bacilliformis (strain ATCC 35685 / KC583 / Herrer 020/F12,63).